A 144-amino-acid polypeptide reads, in one-letter code: Putative pre-16S rRNA nuclease (144 aa).

This sequence belongs to the YqgF nuclease family.

It is found in the cytoplasm. Its function is as follows. Could be a nuclease involved in processing of the 5'-end of pre-16S rRNA. This chain is Putative pre-16S rRNA nuclease, found in Pseudomonas aeruginosa (strain LESB58).